Here is a 356-residue protein sequence, read N- to C-terminus: Histidinol-phosphate aminotransferase 1 (356 aa).

Lysine 213 is modified (N6-(pyridoxal phosphate)lysine).

The protein belongs to the class-II pyridoxal-phosphate-dependent aminotransferase family. Histidinol-phosphate aminotransferase subfamily. As to quaternary structure, homodimer. It depends on pyridoxal 5'-phosphate as a cofactor.

The catalysed reaction is L-histidinol phosphate + 2-oxoglutarate = 3-(imidazol-4-yl)-2-oxopropyl phosphate + L-glutamate. It participates in amino-acid biosynthesis; L-histidine biosynthesis; L-histidine from 5-phospho-alpha-D-ribose 1-diphosphate: step 7/9. In Burkholderia pseudomallei (strain K96243), this protein is Histidinol-phosphate aminotransferase 1.